The following is a 425-amino-acid chain: Testicular acid phosphatase (425 aa).

The signal sequence occupies residues 1-27 (MAEPGSQGHTVGPLLLLLLLLLPRALP). Residues 28–392 (EGPLLFVALV…EPASPPATVP (365 aa)) lie on the Extracellular side of the membrane. The active-site Nucleophile is the H40. 3 disulfides stabilise this stretch: C158–C378, C213–C311, and C353–C357. D288 functions as the Proton donor in the catalytic mechanism. The chain crosses the membrane as a helical span at residues 393–413 (LLAGAVAVLAVLSLGLGLLAW). The Cytoplasmic segment spans residues 414-425 (RPRCLRALGGTV).

This sequence belongs to the histidine acid phosphatase family. In terms of assembly, homodimer. Glycosylated.

The protein localises to the membrane. It carries out the reaction a phosphate monoester + H2O = an alcohol + phosphate. In terms of biological role, may dephosphorylate receptor tyrosine-protein kinase ERBB4 and inhibits its ligand-induced proteolytic cleavage. May play a role in odontogenesis. The polypeptide is Testicular acid phosphatase (Mus musculus (Mouse)).